Reading from the N-terminus, the 144-residue chain is Hexon-interlacing protein (144 aa).

Positions 106-133 (LTVMLAKLETLTAQLEELSQKVEELADA) form a coiled coil.

The protein belongs to the adenoviridae hexon-interlacing protein family. As to quaternary structure, homotrimer. Interacts with hexon protein; this interaction tethers the hexons together. Self-interacts with adjacent proteins. Interacts with kinesin light chain KLC1; this interaction leads to capsid disruption at the nuclear pore complex during virus entry into host cell.

It localises to the virion. It is found in the host nucleus. Functionally, structural component of the virion that acts as a cement protein on the capsid exterior and forms triskelion structures consisting of three molecules that stabilize three hexon trimers at the center of each icosahedral facet and fixes the peripentonal hexons. Dispensable for assembly. During virus entry, recruits the anterograde motor kinesin-1 to the capsid docked at the nuclear pore complex thereby subjecting the docked capsid to a pulling force. The resulting tension leads to capsid disruption, dispersion of capsid fragments toward cell periphery and eventually viral DNA entry into the host nucleus. In Homo sapiens (Human), this protein is Hexon-interlacing protein.